The following is a 291-amino-acid chain: 33 kDa chaperonin (291 aa).

Cystine bridges form between Cys-237–Cys-239 and Cys-270–Cys-273.

Belongs to the HSP33 family. Under oxidizing conditions two disulfide bonds are formed involving the reactive cysteines. Under reducing conditions zinc is bound to the reactive cysteines and the protein is inactive.

The protein resides in the cytoplasm. Redox regulated molecular chaperone. Protects both thermally unfolding and oxidatively damaged proteins from irreversible aggregation. Plays an important role in the bacterial defense system toward oxidative stress. The protein is 33 kDa chaperonin of Bacillus cereus (strain G9842).